The sequence spans 1297 residues: Protein ENHANCED DOWNY MILDEW 2 (1297 aa).

The segment at 222–281 (ESVCAICDNGGEILCCEGSCLRSFHATKKDGEDSLCDSLGFNKMQVEAIQKYFCPNCEHK) adopts a PHD-type 1; degenerate zinc-finger fold. Positions 237, 241, 275, 278, 285, 288, 306, 311, 316, 319, 346, and 349 each coordinate Zn(2+). The segment at 282 to 352 (IHQCFICKNL…EYTCPLHKCS (71 aa)) adopts a PHD-type 2; atypical zinc-finger fold. A PHD-type 3; degenerate zinc finger spans residues 351-417 (CSVCENGEVK…RVLIYCQEHE (67 aa)). Positions 445–452 (QRRILESH) match the Nuclear localization signal 1 motif. Disordered regions lie at residues 471 to 547 (CGKA…ARDA) and 562 to 598 (TQEP…IPTL). The segment covering 475–487 (SKNSFRSSFPSSK) has biased composition (low complexity). Positions 492–499 (TKKHGLVS) match the Nuclear localization signal 2 motif. The span at 526–547 (KMMEDSREAGKNKLGVKEARDA) shows a compositional bias: basic and acidic residues. Short sequence motifs (nuclear localization signal) lie at residues 610-617 (MKKATEEI) and 979-986 (LKKEGKTK). 2 stretches are compositionally biased toward basic and acidic residues: residues 969–990 (QSDH…DYSG) and 1096–1109 (EVSR…RTSR). 3 disordered regions span residues 969 to 1017 (QSDH…GELS), 1085 to 1109 (HGCK…RTSR), and 1260 to 1297 (FPLP…WIND).

As to quaternary structure, interacts with WNK8 in nucleus; this interaction is involved in developmental processes regulation but not in RPP7-dependent disease resistance. Interacts with EML1 and EML2 in nucleus. Component of the ASI1-AIPP1-EDM2 (AAE) RNA regulatory complex composed of at least AIPP1/EDM3, ASI1 and EDM2 and may contain CPL2, AIPP2 and AIPP3/BDT1. Binds directly to AIPP1/EDM3. Co-associates with AIPP1/EDM3 to histone H3 lysine 9 dimethylation (H3K9me2)-marked chromatin and transcripts at a critical proximal polyadenylation site of RPP7 to hamper proximal transcript polyadeylation/termination. Phosphorylated by WNK8.

Its subcellular location is the nucleus. Cellular antisilencing factor and regulator of genome DNA methylation patterns involved in the regulation of chromatin states. Together with SUVH4, monitors repressive epigenetic marks H3K27me1, H3K9me2, and prevents DNA-methylation at CHG sites, affecting especially the expression of transposons and developmentally important genes. Collaboratively with ASI1 and AIPP1/EDM3, the AAE complex regulates alternative RNA processing (e.g. alternative splicing) and epigenetic silencing (e.g. H3K9me2) of intronic heterochromatin-containing genes as well as genic heterochromatin-containing genes by promoting distal 3' polyadenylation. Epigenetic reader that binds DNA and contributes to transcriptional transposable element (TE) silencing by modulating levels of the repressive post-translational histone modifications (PHM) H3K9me2. In cv. Columbia, required for RPP7-dependent disease resistance against the Hyaloperonospora arabidopsidis isolate Hiks1, by promoting levels of RPP7 via alternative polyadenylation (APA), resulting from cooption of epigenetic information at the TE insertion locus COPIA-R7. Exhibits a global role in NLR (nucleotide-binding, leucine-rich repeat) defense genes epigenetic (e.g. H3K9me2 hallmarks) expression control; promotes the accumulation of RPP7, RPP4 and some other proteins, but mediates the repression of several other NLR products, probably to compensate for fitness penalties caused by defense mechanisms. Regulates development processes such as the formation of leaf pavement cells, leaf expansion, fertility and flowering. Prevents FLC accumulation to control flowering. Modulates stomatal development by regulating the methylation-mediated silencing of ERECTA receptor genes (e.g. ER, ERL1 and ERL2) and preventing cell divisions. This chain is Protein ENHANCED DOWNY MILDEW 2, found in Arabidopsis thaliana (Mouse-ear cress).